The primary structure comprises 204 residues: Probable nicotinate-nucleotide adenylyltransferase (204 aa).

Belongs to the NadD family.

It catalyses the reaction nicotinate beta-D-ribonucleotide + ATP + H(+) = deamido-NAD(+) + diphosphate. Its pathway is cofactor biosynthesis; NAD(+) biosynthesis; deamido-NAD(+) from nicotinate D-ribonucleotide: step 1/1. Its function is as follows. Catalyzes the reversible adenylation of nicotinate mononucleotide (NaMN) to nicotinic acid adenine dinucleotide (NaAD). This chain is Probable nicotinate-nucleotide adenylyltransferase, found in Dehalococcoides mccartyi (strain CBDB1).